Reading from the N-terminus, the 1088-residue chain is Ran-binding protein 17 (1088 aa).

N-acetylalanine is present on Ala-2. Ser-569 bears the Phosphoserine mark.

The protein belongs to the exportin family. As to quaternary structure, binds to nucleoporins and the GTP-bound form of Ran. In terms of tissue distribution, highly expressed in primary spermatocytes and very weakly in pancreas.

It is found in the cytoplasm. It localises to the nucleus. The protein resides in the nuclear pore complex. In terms of biological role, may function as a nuclear transport receptor. The sequence is that of Ran-binding protein 17 (Ranbp17) from Mus musculus (Mouse).